We begin with the raw amino-acid sequence, 764 residues long: Plasma membrane fusion protein prm-1 (764 aa).

Residues 1 to 61 (MVYNEKNGGG…YLGLRARLSQ (61 aa)) lie on the Extracellular side of the membrane. A helical membrane pass occupies residues 62–82 (LWFNRWTILLILVLIRVIILT). Residues 83 to 149 (ANLKENLGDA…LKMILTGVQA (67 aa)) lie on the Cytoplasmic side of the membrane. A helical transmembrane segment spans residues 150–170 (IIMFVINMYIGTFACLVAAFI). The Extracellular portion of the chain corresponds to 171-334 (HGGLHVATAV…SLITLVYKAK (164 aa)). Asn271 and Asn315 each carry an N-linked (GlcNAc...) asparagine glycan. Residues 335–355 (IAFLVVIIILALLAIFVMGYI) form a helical membrane-spanning segment. The Cytoplasmic portion of the chain corresponds to 356-424 (EYRGFKRERE…AFAYATSLPA (69 aa)). The helical transmembrane segment at 425-445 (LFVLSLAVAGMLSCLFQWVLL) threads the bilayer. The Extracellular segment spans residues 446 to 624 (RQIEKKAPEL…NGVIQEALIT (179 aa)). 3 N-linked (GlcNAc...) asparagine glycosylation sites follow: Asn479, Asn508, and Asn527. The helical transmembrane segment at 625 to 645 (LGLFLTYVIVVLIGVMGALIG) threads the bilayer. Residues 646-764 (WATPGKTRGE…EKVPGYFTPI (119 aa)) lie on the Cytoplasmic side of the membrane. Disordered stretches follow at residues 653–701 (RGEG…GGGG) and 735–754 (HQRT…PHGD).

Belongs to the PRM1 family.

The protein resides in the cell membrane. In terms of biological role, involved in cell fusion during mating by stabilizing the plasma membrane fusion event. The sequence is that of Plasma membrane fusion protein prm-1 (prm-1) from Neurospora crassa (strain ATCC 24698 / 74-OR23-1A / CBS 708.71 / DSM 1257 / FGSC 987).